Reading from the N-terminus, the 401-residue chain is Keratin-associated protein 10-4 (401 aa).

Repeat copies occupy residues 36–40 (CCEPP), 41–45 (CCAPS), 46–50 (CCAPA), 67–71 (CCPVT), 89–93 (CCQQS), 99–103 (CCASS), 109–113 (CCVPV), 114–118 (CCKTV), 119–123 (CCKPV), 124–128 (CCVPV), 129–133 (CCGDS), 135–139 (CCQQS), 145–149 (CCTSS), 155–159 (CCVPI), 160–164 (CCKPV), 172–176 (CCQQS), 186–190 (CCQAV), 208–212 (CCQQS), 218–222 (CCTSS), 228–232 (CCVPV), 233–237 (CCKTV), 238–242 (CCKPV), 250–254 (CCQQS), 270–274 (CCVPV), 275–279 (CCKPV), 280–284 (CCKPV), 297–301 (CCQQS), 307–311 (CCTSS), 317–321 (CCVPV), 322–326 (CCKPV), 339–343 (CCQQS), 349–353 (CCTTS), 354–358 (CCRPS), 373–377 (CCVPV), and 391–395 (CCRPA). The 36 X 5 AA repeats of C-C-X(3) stretch occupies residues 36-395 (CCEPPCCAPS…SCQPSCCRPA (360 aa)).

Belongs to the KRTAP type 10 family. As to quaternary structure, interacts with hair keratins. Restricted to hair root, not detected in any other tissues.

Functionally, in the hair cortex, hair keratin intermediate filaments are embedded in an interfilamentous matrix, consisting of hair keratin-associated proteins (KRTAP), which are essential for the formation of a rigid and resistant hair shaft through their extensive disulfide bond cross-linking with abundant cysteine residues of hair keratins. The matrix proteins include the high-sulfur and high-glycine-tyrosine keratins. In Homo sapiens (Human), this protein is Keratin-associated protein 10-4 (KRTAP10-4).